The following is a 211-amino-acid chain: Large ribosomal subunit protein eL13 (211 aa).

Lysine 16 bears the N6-acetyllysine mark. Phosphoserine is present on residues serine 52, serine 77, and serine 106. Glycyl lysine isopeptide (Lys-Gly) (interchain with G-Cter in SUMO2) cross-links involve residues lysine 123 and lysine 145. Lysine 174 participates in a covalent cross-link: Glycyl lysine isopeptide (Lys-Gly) (interchain with G-Cter in SUMO1); alternate. Residues lysine 174 and lysine 177 each participate in a glycyl lysine isopeptide (Lys-Gly) (interchain with G-Cter in SUMO2); alternate cross-link. Position 177 is an N6-acetyllysine; alternate (lysine 177).

It belongs to the eukaryotic ribosomal protein eL13 family. As to quaternary structure, component of the 60S large ribosomal subunit (LSU).

The protein localises to the cytoplasm. Its function is as follows. Component of the ribosome, a large ribonucleoprotein complex responsible for the synthesis of proteins in the cell. The small ribosomal subunit (SSU) binds messenger RNAs (mRNAs) and translates the encoded message by selecting cognate aminoacyl-transfer RNA (tRNA) molecules. The large subunit (LSU) contains the ribosomal catalytic site termed the peptidyl transferase center (PTC), which catalyzes the formation of peptide bonds, thereby polymerizing the amino acids delivered by tRNAs into a polypeptide chain. The nascent polypeptides leave the ribosome through a tunnel in the LSU and interact with protein factors that function in enzymatic processing, targeting, and the membrane insertion of nascent chains at the exit of the ribosomal tunnel. As part of the LSU, it is probably required for its formation and the maturation of rRNAs. Plays a role in bone development. The chain is Large ribosomal subunit protein eL13 (RPL13) from Cricetulus griseus (Chinese hamster).